Here is a 726-residue protein sequence, read N- to C-terminus: Uracil catabolism protein 2 (726 aa).

A DNA-binding region (zn(2)-C6 fungal-type) is located at residues 24-53 (CGVCRKFKTRCDFEPLVGKCHRCNVLRLEC). Disordered stretches follow at residues 152-183 (AGMG…FVNG) and 629-681 (SGRL…SGAD). Over residues 161-170 (YDDDDDGDDD) the composition is skewed to acidic residues. Polar residues predominate over residues 640–679 (RGSPSMTPGFQQSVQSSSALQGSKAGSPQSARSVNSQGSG).

It belongs to the URC2 family.

It localises to the nucleus. Functionally, probable transcriptional activator involved in uracil catabolism. In Lachancea kluyveri (Yeast), this protein is Uracil catabolism protein 2 (URC2).